Here is a 1104-residue protein sequence, read N- to C-terminus: Lon protease homolog, mitochondrial (1104 aa).

Residues Met-1–Phe-54 constitute a mitochondrion transit peptide. 2 disordered regions span residues Ser-41 to Val-192 and Ser-296 to Arg-317. 2 stretches are compositionally biased toward basic and acidic residues: residues Lys-64–Gly-104 and Lys-125–Ala-144. Positions Ser-158–Ser-169 are enriched in low complexity. Composition is skewed to basic and acidic residues over residues Gly-172–Leu-187 and Asn-308–Arg-317. A Lon N-terminal domain is found at Val-199 to Leu-451. Residue Gly-604 to Thr-611 coordinates ATP. Over residues Ala-825–Gly-839 the composition is skewed to basic and acidic residues. A disordered region spans residues Ala-825–Val-857. The Lon proteolytic domain occupies Thr-891–Asp-1077. Catalysis depends on residues Ser-983 and Lys-1026.

It belongs to the peptidase S16 family. In terms of assembly, homohexamer or homoheptamer. Organized in a ring with a central cavity.

It is found in the mitochondrion matrix. The catalysed reaction is Hydrolysis of proteins in presence of ATP.. In terms of biological role, ATP-dependent serine protease that mediates the selective degradation of misfolded, unassembled or oxidatively damaged polypeptides as well as certain short-lived regulatory proteins in the mitochondrial matrix. May also have a chaperone function in the assembly of inner membrane protein complexes. Participates in the regulation of mitochondrial gene expression and in the maintenance of the integrity of the mitochondrial genome. Binds to mitochondrial DNA in a site-specific manner. The protein is Lon protease homolog, mitochondrial (pim1) of Emericella nidulans (strain FGSC A4 / ATCC 38163 / CBS 112.46 / NRRL 194 / M139) (Aspergillus nidulans).